Reading from the N-terminus, the 170-residue chain is Peptide deformylase (170 aa).

Positions 91 and 133 each coordinate Fe cation. Glu-134 is an active-site residue. Fe cation is bound at residue His-137.

The protein belongs to the polypeptide deformylase family. Fe(2+) serves as cofactor.

It carries out the reaction N-terminal N-formyl-L-methionyl-[peptide] + H2O = N-terminal L-methionyl-[peptide] + formate. In terms of biological role, removes the formyl group from the N-terminal Met of newly synthesized proteins. Requires at least a dipeptide for an efficient rate of reaction. N-terminal L-methionine is a prerequisite for activity but the enzyme has broad specificity at other positions. This chain is Peptide deformylase, found in Yersinia pseudotuberculosis serotype O:1b (strain IP 31758).